The primary structure comprises 599 residues: Elongation factor 4 (599 aa).

The region spanning 5-187 (SHIRNFSIIA…RLVHTIPAPE (183 aa)) is the tr-type G domain. Residues 17–22 (DHGKST) and 134–137 (NKMD) contribute to the GTP site.

It belongs to the TRAFAC class translation factor GTPase superfamily. Classic translation factor GTPase family. LepA subfamily.

The protein localises to the cell inner membrane. The enzyme catalyses GTP + H2O = GDP + phosphate + H(+). Its function is as follows. Required for accurate and efficient protein synthesis under certain stress conditions. May act as a fidelity factor of the translation reaction, by catalyzing a one-codon backward translocation of tRNAs on improperly translocated ribosomes. Back-translocation proceeds from a post-translocation (POST) complex to a pre-translocation (PRE) complex, thus giving elongation factor G a second chance to translocate the tRNAs correctly. Binds to ribosomes in a GTP-dependent manner. The chain is Elongation factor 4 from Pseudomonas putida (strain ATCC 47054 / DSM 6125 / CFBP 8728 / NCIMB 11950 / KT2440).